A 151-amino-acid polypeptide reads, in one-letter code: Guanylate kinase homolog (151 aa).

The Guanylate kinase-like domain maps to 1–141; the sequence is MEREGVDYHY…AYSKLIQILQ (141 aa).

The protein belongs to the guanylate kinase family.

This Vaccinia virus (strain Copenhagen) (VACV) protein is Guanylate kinase homolog.